The following is a 124-amino-acid chain: Photoactive yellow protein (124 aa).

In terms of domain architecture, PAS spans Ala22–Gly85. S-(4-hydroxycinnamyl)cysteine is present on Cys68.

It belongs to the photoactive yellow protein family. Post-translationally, the 4-hydroxycinnamic acid (p-coumaric acid) chromophore is covalently bound via a thioester linkage.

Its function is as follows. This photoactive protein is a photoreceptor with kinetics similar to that of rhodopsin. The chain is Photoactive yellow protein (pyp) from Cereibacter sphaeroides (strain ATCC 17023 / DSM 158 / JCM 6121 / CCUG 31486 / LMG 2827 / NBRC 12203 / NCIMB 8253 / ATH 2.4.1.) (Rhodobacter sphaeroides).